The following is a 283-amino-acid chain: MQQIYTVKEIRSVAARSGPFAPVLSATSRGVAGALRPLVQATVPATPEQPVLDLKRPFLSRESLSGQAVRRPLVASVGLNVPASVCYSHTDIKVPDFSEYRRLEVLDSTKSSRESTEARKGFSYLVTGVTTVGVAYAAKNAVTQFVSSMSASADVLALAKIEIKLSDIPEGKNMAFKWRGKPLFVRHRTQKEIKQEAAVELSQLRDPQHDLDRVKKPEWVILIGVCTHLGCVPIANAGDFGGYYCPCHGSHYDASGRIRLGPATLNLEVPTYEFTSDDMVIVG.

The chain crosses the membrane as a helical span at residues 116–149 (TEARKGFSYLVTGVTTVGVAYAAKNAVTQFVSSM). Residues 196-281 (EAAVELSQLR…YEFTSDDMVI (86 aa)) enclose the Rieske domain. [2Fe-2S] cluster-binding residues include Cys226, His228, Cys245, and His248. A disulfide bond links Cys231 and Cys247.

It belongs to the Rieske iron-sulfur protein family. Requires [2Fe-2S] cluster as cofactor.

It localises to the membrane. The protein is Putative cytochrome b-c1 complex subunit Rieske-like protein 1 (UQCRFS1P1) of Homo sapiens (Human).